The primary structure comprises 114 residues: MPQRKLGKTGAHRKAMFRNMLTDFFRHGRIETTLPKAKELRSLAEKMITTAKTNDLSSRRKVLKYVKDKEVVKKLFDEIAPRYSERPGGYTRILKMYPRRGDAAEKAIIELVEE.

Belongs to the bacterial ribosomal protein bL17 family. In terms of assembly, part of the 50S ribosomal subunit. Contacts protein L32.

The protein is Large ribosomal subunit protein bL17 of Halothermothrix orenii (strain H 168 / OCM 544 / DSM 9562).